The following is a 509-amino-acid chain: Lysophospholipid acyltransferase (509 aa).

At methionine 1–serine 14 the chain is on the lumenal side. Residues phenylalanine 15–phenylalanine 35 traverse the membrane as a helical segment. Topologically, residues alanine 36–serine 55 are cytoplasmic. The helical transmembrane segment at isoleucine 56–phenylalanine 76 threads the bilayer. Residues aspartate 77–proline 94 are Lumenal-facing. A helical membrane pass occupies residues tryptophan 95–tyrosine 115. The Cytoplasmic segment spans residues proline 116–arginine 223. Residues glycine 224–leucine 244 traverse the membrane as a helical segment. Residues threonine 245–proline 246 lie on the Lumenal side of the membrane. The chain crosses the membrane as a helical span at residues lysine 247–alanine 267. Over arginine 268–aspartate 410 the chain is Cytoplasmic. Residue histidine 363 is part of the active site. The helical transmembrane segment at valine 411–leucine 431 threads the bilayer. At asparagine 432–lysine 441 the chain is on the lumenal side. Residues glutamate 442–isoleucine 462 traverse the membrane as a helical segment. The Cytoplasmic portion of the chain corresponds to arginine 463 to glutamate 509. The segment at serine 488–glutamate 509 is disordered. A Phosphoserine modification is found at serine 490. A compositionally biased stretch (basic and acidic residues) spans proline 500–glutamate 509.

It belongs to the membrane-bound acyltransferase family.

It localises to the endoplasmic reticulum membrane. Its subcellular location is the microsome membrane. The enzyme catalyses a 1-acyl-sn-glycero-3-phosphate + an acyl-CoA = a 1,2-diacyl-sn-glycero-3-phosphate + CoA. The catalysed reaction is a 1-acyl-sn-glycero-3-phosphocholine + an acyl-CoA = a 1,2-diacyl-sn-glycero-3-phosphocholine + CoA. It catalyses the reaction a 1-acyl-sn-glycero-3-phosphoethanolamine + an acyl-CoA = a 1,2-diacyl-sn-glycero-3-phosphoethanolamine + CoA. In terms of biological role, membrane-bound O-acyltransferase that mediates the incorporation of unsaturated acyl chains into the sn-2 position of phospholipids. The polypeptide is Lysophospholipid acyltransferase (ale1) (Schizosaccharomyces pombe (strain 972 / ATCC 24843) (Fission yeast)).